A 236-amino-acid polypeptide reads, in one-letter code: 2,3,4,5-tetrahydropyridine-2,6-dicarboxylate N-acetyltransferase (236 aa).

It belongs to the transferase hexapeptide repeat family. DapH subfamily.

It carries out the reaction (S)-2,3,4,5-tetrahydrodipicolinate + acetyl-CoA + H2O = L-2-acetamido-6-oxoheptanedioate + CoA. It participates in amino-acid biosynthesis; L-lysine biosynthesis via DAP pathway; LL-2,6-diaminopimelate from (S)-tetrahydrodipicolinate (acetylase route): step 1/3. Functionally, catalyzes the transfer of an acetyl group from acetyl-CoA to tetrahydrodipicolinate. This Bacillus licheniformis (strain ATCC 14580 / DSM 13 / JCM 2505 / CCUG 7422 / NBRC 12200 / NCIMB 9375 / NCTC 10341 / NRRL NRS-1264 / Gibson 46) protein is 2,3,4,5-tetrahydropyridine-2,6-dicarboxylate N-acetyltransferase.